Consider the following 278-residue polypeptide: Probable ribosomal RNA small subunit methyltransferase A (278 aa).

N23, L25, G50, E71, D95, and N110 together coordinate S-adenosyl-L-methionine.

This sequence belongs to the class I-like SAM-binding methyltransferase superfamily. rRNA adenine N(6)-methyltransferase family. RsmA subfamily.

The protein localises to the cytoplasm. In terms of biological role, specifically dimethylates two adjacent adenosines in the loop of a conserved hairpin near the 3'-end of 16S rRNA in the 30S particle. May play a critical role in biogenesis of 30S subunits. The polypeptide is Probable ribosomal RNA small subunit methyltransferase A (Thermococcus gammatolerans (strain DSM 15229 / JCM 11827 / EJ3)).